Reading from the N-terminus, the 72-residue chain is Translation initiation factor IF-1 (72 aa).

The S1-like domain maps to 1–72 (MAKEGAIEVE…TRGRIVYRYK (72 aa)).

Belongs to the IF-1 family. As to quaternary structure, component of the 30S ribosomal translation pre-initiation complex which assembles on the 30S ribosome in the order IF-2 and IF-3, IF-1 and N-formylmethionyl-tRNA(fMet); mRNA recruitment can occur at any time during PIC assembly.

It is found in the cytoplasm. One of the essential components for the initiation of protein synthesis. Stabilizes the binding of IF-2 and IF-3 on the 30S subunit to which N-formylmethionyl-tRNA(fMet) subsequently binds. Helps modulate mRNA selection, yielding the 30S pre-initiation complex (PIC). Upon addition of the 50S ribosomal subunit IF-1, IF-2 and IF-3 are released leaving the mature 70S translation initiation complex. This Corynebacterium glutamicum (strain R) protein is Translation initiation factor IF-1.